The following is a 151-amino-acid chain: Regulatory protein RecX (151 aa).

This sequence belongs to the RecX family.

The protein localises to the cytoplasm. Modulates RecA activity. This chain is Regulatory protein RecX, found in Prosthecochloris aestuarii (strain DSM 271 / SK 413).